Consider the following 48-residue polypeptide: Delta-actitoxin-Bcg1c (48 aa).

Intrachain disulfides connect Cys4–Cys45, Cys6–Cys35, and Cys28–Cys46.

It localises to the secreted. Its subcellular location is the nematocyst. Its function is as follows. Binds specifically to voltage-gated sodium channels SCN1A/Nav1.1, thereby delaying their inactivation during signal transduction. The polypeptide is Delta-actitoxin-Bcg1c (Bunodosoma cangicum (Sea anemone)).